An 85-amino-acid polypeptide reads, in one-letter code: Transcriptional repressor protein KorC (85 aa).

The H-T-H motif DNA-binding region spans 28 to 47 (EVLRLAGLTGGKAAKVLGLG).

Functionally, acts with KorA as corepressor in the control of the kilC and kilE operons. This is Transcriptional repressor protein KorC (korC) from Escherichia coli.